The chain runs to 227 residues: UPF0659 protein YMR090W (227 aa).

It belongs to the UPF0659 family.

The protein resides in the cytoplasm. The chain is UPF0659 protein YMR090W from Saccharomyces cerevisiae (strain ATCC 204508 / S288c) (Baker's yeast).